Reading from the N-terminus, the 156-residue chain is Ribosomal RNA large subunit methyltransferase H (156 aa).

S-adenosyl-L-methionine contacts are provided by residues Leu73, Gly104, and 123-128 (ISSMTL).

Belongs to the RNA methyltransferase RlmH family. In terms of assembly, homodimer.

The protein resides in the cytoplasm. It catalyses the reaction pseudouridine(1915) in 23S rRNA + S-adenosyl-L-methionine = N(3)-methylpseudouridine(1915) in 23S rRNA + S-adenosyl-L-homocysteine + H(+). In terms of biological role, specifically methylates the pseudouridine at position 1915 (m3Psi1915) in 23S rRNA. The sequence is that of Ribosomal RNA large subunit methyltransferase H from Burkholderia ambifaria (strain ATCC BAA-244 / DSM 16087 / CCUG 44356 / LMG 19182 / AMMD) (Burkholderia cepacia (strain AMMD)).